Consider the following 304-residue polypeptide: Nucleotide-binding protein KRH_12070 (304 aa).

Residue 27 to 34 participates in ATP binding; that stretch reads GMSGAGRS. 78-81 provides a ligand contact to GTP; the sequence is DVRG.

It belongs to the RapZ-like family.

Its function is as follows. Displays ATPase and GTPase activities. In Kocuria rhizophila (strain ATCC 9341 / DSM 348 / NBRC 103217 / DC2201), this protein is Nucleotide-binding protein KRH_12070.